Here is a 594-residue protein sequence, read N- to C-terminus: Adenine deaminase 1 (594 aa).

This sequence belongs to the metallo-dependent hydrolases superfamily. Adenine deaminase family. Mn(2+) is required as a cofactor.

The enzyme catalyses adenine + H2O + H(+) = hypoxanthine + NH4(+). This Jannaschia sp. (strain CCS1) protein is Adenine deaminase 1.